Consider the following 197-residue polypeptide: Probable GTP-binding protein EngB (197 aa).

The 174-residue stretch at 22–195 (GYPEIALVGR…WNWIEAQAFG (174 aa)) folds into the EngB-type G domain. GTP contacts are provided by residues 30 to 37 (GRSNVGKS), 57 to 61 (GKTQT), 75 to 78 (DVPG), 142 to 145 (TKSD), and 174 to 176 (FSA). Mg(2+)-binding residues include Ser37 and Thr59.

The protein belongs to the TRAFAC class TrmE-Era-EngA-EngB-Septin-like GTPase superfamily. EngB GTPase family. Mg(2+) is required as a cofactor.

Functionally, necessary for normal cell division and for the maintenance of normal septation. This is Probable GTP-binding protein EngB from Levilactobacillus brevis (strain ATCC 367 / BCRC 12310 / CIP 105137 / JCM 1170 / LMG 11437 / NCIMB 947 / NCTC 947) (Lactobacillus brevis).